Reading from the N-terminus, the 360-residue chain is MLLLLTAYLSKYHTFFTVFNYLSLRAILGVLTALAISLLVGNKVIVLLQRLQIGQAVRSDGPQTHLSKAGTPTMGGALIIFSISVSTLLWGDLRNQYVWVVLLVMLAFGVVGWVDDYRKVVEKNPRGLPGRWKYFWQSVFGLAAAFYLYYTASTPAETALIVPLFKDVAIPLGMFFIVLTYFVIVGTSNAVNLTDGLDGLAILPTVLVGGALGVFAYLTGNIRFADYLLIPYVHGSGELLVFCAALAGAGLGFLWFNTYPAQIFMGDVGSLALGAALGTIAVIVRQELVLFIMGGVFVMETVSVILQVASYKLTKRRIFRMAPIHHHFELKGWAEPKVIVRFWIITVCLVLVGFATLKVR.

A run of 10 helical transmembrane segments spans residues 27–47 (ILGV…VIVL), 73–93 (TMGG…WGDL), 97–117 (YVWV…VDDY), 145–165 (AFYL…VPLF), 168–188 (VAIP…VGTS), 199–219 (GLAI…AYLT), 236–256 (SGEL…FLWF), 263–283 (IFMG…IAVI), 288–308 (LVLF…ILQV), and 337–357 (KVIV…FATL).

Belongs to the glycosyltransferase 4 family. MraY subfamily. Mg(2+) serves as cofactor.

The protein resides in the cell inner membrane. It catalyses the reaction UDP-N-acetyl-alpha-D-muramoyl-L-alanyl-gamma-D-glutamyl-meso-2,6-diaminopimeloyl-D-alanyl-D-alanine + di-trans,octa-cis-undecaprenyl phosphate = di-trans,octa-cis-undecaprenyl diphospho-N-acetyl-alpha-D-muramoyl-L-alanyl-D-glutamyl-meso-2,6-diaminopimeloyl-D-alanyl-D-alanine + UMP. Its pathway is cell wall biogenesis; peptidoglycan biosynthesis. Functionally, catalyzes the initial step of the lipid cycle reactions in the biosynthesis of the cell wall peptidoglycan: transfers peptidoglycan precursor phospho-MurNAc-pentapeptide from UDP-MurNAc-pentapeptide onto the lipid carrier undecaprenyl phosphate, yielding undecaprenyl-pyrophosphoryl-MurNAc-pentapeptide, known as lipid I. The polypeptide is Phospho-N-acetylmuramoyl-pentapeptide-transferase (Marinomonas sp. (strain MWYL1)).